The primary structure comprises 465 residues: uncharacterized protein (465 aa).

A TRAM domain is found at 13-71; sequence GPRPGLRLELQAIDLDRDGHGLARWQGWVVVVPGLLPGERAKVQLQQRQKSRWLSRISE. [4Fe-4S] cluster contacts are provided by cysteine 84, cysteine 90, cysteine 93, and cysteine 171. The S-adenosyl-L-methionine site is built by glutamine 294, tyrosine 324, glutamate 345, and aspartate 391. Catalysis depends on cysteine 418, which acts as the Nucleophile.

This sequence belongs to the class I-like SAM-binding methyltransferase superfamily. RNA M5U methyltransferase family.

This is an uncharacterized protein from Parasynechococcus marenigrum (strain WH8102).